The primary structure comprises 297 residues: Calponin-1 (297 aa).

The 104-residue stretch at 28–131 folds into the Calponin-homology (CH) domain; it reads HQREQELREW…STLLALASMA (104 aa). Calponin-like repeat units follow at residues 164–189, 204–229, and 243–268; these read IGLQMGTNKFASQQGMTAYGTRRHLY, ISLQMGTNKGASQAGMTAPGTKRQIF, and VSLQMGSNKGASQRGMTVYGLPRQVY. A Phosphothreonine; by ROCK2 modification is found at Thr-170. Ser-175 is modified (phosphoserine; by ROCK2). 2 positions are modified to phosphothreonine; by ROCK2: Thr-180 and Thr-184. Thr-259 is subject to Phosphothreonine; by ROCK2.

This sequence belongs to the calponin family. In terms of assembly, part of cGMP kinase signaling complex at least composed of ACTA2/alpha-actin, CNN1/calponin H1, PLN/phospholamban, PRKG1 and ITPR1.

Functionally, thin filament-associated protein that is implicated in the regulation and modulation of smooth muscle contraction. It is capable of binding to actin, calmodulin and tropomyosin. The interaction of calponin with actin inhibits the actomyosin Mg-ATPase activity. The chain is Calponin-1 (CNN1) from Ovis aries (Sheep).